The primary structure comprises 771 residues: Ribonucleoside-diphosphate reductase large subunit (771 aa).

In terms of domain architecture, ATP-cone spans Met1–Lys92. Residues Lys5–Arg6, Glu11–Lys17, Thr53, Asp57, and Lys88 contribute to the ATP site. 2 residues coordinate GDP: Ser202 and Ser217. Residues Asp226–Ile228, Lys243, and Arg256 each bind dTTP. A GDP-binding site is contributed by Asn427. Asn427 (proton acceptor) is an active-site residue. The active-site Cysteine radical intermediate is Cys429. Residues Glu431 and Thr603 to Thr606 each bind GDP. Residue Glu431 is the Proton acceptor of the active site.

The protein belongs to the ribonucleoside diphosphate reductase large chain family. In terms of assembly, interacts with RNR2/OPG047 subunit. Mg(2+) is required as a cofactor.

The enzyme catalyses a 2'-deoxyribonucleoside 5'-diphosphate + [thioredoxin]-disulfide + H2O = a ribonucleoside 5'-diphosphate + [thioredoxin]-dithiol. Its function is as follows. Ribonucleoside-diphosphate reductase holoenzyme provides the precursors necessary for viral DNA synthesis. Allows virus growth in non-dividing cells. Catalyzes the biosynthesis of deoxyribonucleotides from the corresponding ribonucleotides. The protein is Ribonucleoside-diphosphate reductase large subunit (OPG080) of Homo sapiens (Human).